The primary structure comprises 154 residues: Phospholipase A2 OS1 (154 aa).

A signal peptide spans 1-27 (MHPAHLLVLLAVCVSLLGAARIPPLPL). 7 cysteine pairs are disulfide-bonded: Cys38–Cys104, Cys54–Cys153, Cys56–Cys72, Cys71–Cys132, Cys78–Cys125, Cys88–Cys118, and Cys111–Cys123. 2 residues coordinate Ca(2+): Gly57 and Gly59. His75 is an active-site residue. Asp76 is a Ca(2+) binding site. Residue Asp126 is part of the active site.

This sequence belongs to the phospholipase A2 family. Group I subfamily. D49 sub-subfamily. In terms of assembly, monomer. Ca(2+) is required as a cofactor. Expressed by the venom gland.

It is found in the secreted. It carries out the reaction a 1,2-diacyl-sn-glycero-3-phosphocholine + H2O = a 1-acyl-sn-glycero-3-phosphocholine + a fatty acid + H(+). Functionally, snake venom phospholipase A2 (PLA2) that has a low specific activity on phospholipid substrates, and is neither neurotoxic, nor myotoxic. Induces endothelial cell migration which is mediated, at least in part, by its hydrolytic products. Shows antimalarial activity, but is not able to potently inhibit HIV-1 replication. Binds in a calcium-independent fashion with very high affinity to a muscle-type (M-type) PLA2 receptor, but is a very poor ligand for neuronal-type (N-type) receptors. PLA2 catalyzes the calcium-dependent hydrolysis of the 2-acyl groups in 3-sn-phosphoglycerides. This Oxyuranus scutellatus scutellatus (Australian taipan) protein is Phospholipase A2 OS1.